A 404-amino-acid chain; its full sequence is Subtilisin-like protease 3 (404 aa).

Residues Met1 to Ser20 form the signal peptide. The propeptide occupies Ala21 to Tyr114. The 75-residue stretch at Ser38–Ser112 folds into the Inhibitor I9 domain. The 282-residue stretch at Pro123–Tyr404 folds into the Peptidase S8 domain. N-linked (GlcNAc...) asparagine glycosylation occurs at Asn133. Residues Asp158 and His190 each act as charge relay system in the active site. 5 N-linked (GlcNAc...) asparagine glycosylation sites follow: Asn243, Asn251, Asn286, Asn307, and Asn340. The active-site Charge relay system is the Ser347. N-linked (GlcNAc...) asparagine glycosylation is present at Asn366.

The protein belongs to the peptidase S8 family.

Its subcellular location is the secreted. Secreted subtilisin-like serine endopeptidase. Mediates the degradation of collagen, the major structural protein in the mammalian host. Degrades the nonhelical regions of collagen that function in the cross-linking of the helical components. May function as virulence factor involved in epidermal wing necrosis observed in white nose syndrome (WNS) in bats. This Pseudogymnoascus destructans (strain ATCC MYA-4855 / 20631-21) (Bat white-nose syndrome fungus) protein is Subtilisin-like protease 3.